A 73-amino-acid polypeptide reads, in one-letter code: UPF0435 protein BH2488 (73 aa).

Belongs to the UPF0435 family.

This Halalkalibacterium halodurans (strain ATCC BAA-125 / DSM 18197 / FERM 7344 / JCM 9153 / C-125) (Bacillus halodurans) protein is UPF0435 protein BH2488.